The primary structure comprises 446 residues: Putative zinc metalloprotease NMA0084 (446 aa).

Residue His18 coordinates Zn(2+). The active site involves Glu19. His22 contributes to the Zn(2+) binding site. A run of 3 helical transmembrane segments spans residues 93 to 115 (IAIVAAGPLTNLALAVLLYGLSF), 376 to 398 (FLALVSISLGVLNLLPVPVLDGG), and 419 to 438 (NIGLRFGLALMMLMMAVAFF). A PDZ domain is found at 100–181 (PLTNLALAVL…KVAVGVQTAS (82 aa)).

It belongs to the peptidase M50B family. The cofactor is Zn(2+).

The protein localises to the cell inner membrane. The chain is Putative zinc metalloprotease NMA0084 from Neisseria meningitidis serogroup A / serotype 4A (strain DSM 15465 / Z2491).